Consider the following 410-residue polypeptide: Proteasomal ubiquitin receptor ADRM1 (410 aa).

One can recognise a Pru domain in the interval 17–130; the sequence is SSSKYLVEFR…RKVNEYLNNP (114 aa). At Ser18 the chain carries Phosphoserine. Low complexity predominate over residues 191 to 257; sequence GSGGPATSSS…PAAQTPSLPA (67 aa). 2 disordered regions span residues 191–264 and 381–410; these read GSGG…SSTQ and FAKA…MSLD. The DEUBAD domain occupies 281–395; the sequence is PAMPTEGSGV…EGSDSKTDDG (115 aa). Residues 381–401 show a composition bias toward basic and acidic residues; sequence FAKAMEGSDSKTDDGDSKDKK.

Belongs to the ADRM1 family. In terms of assembly, component of the 19S proteasome regulatory particle complex. The 26S proteasome consists of a 20S core particle (CP) and two 19S regulatory subunits (RP).

The protein localises to the cytoplasm. It localises to the nucleus. Functionally, component of the 26S proteasome, a multiprotein complex involved in the ATP-dependent degradation of ubiquitinated proteins. This complex plays a key role in the maintenance of protein homeostasis by removing misfolded or damaged proteins, which could impair cellular functions, and by removing proteins whose functions are no longer required. Therefore, the proteasome participates in numerous cellular processes, including cell cycle progression, apoptosis, or DNA damage repair. Within the complex, functions as a proteasomal ubiquitin receptor. This is Proteasomal ubiquitin receptor ADRM1 (adrm1b) from Danio rerio (Zebrafish).